The chain runs to 207 residues: Proteasome subunit beta 1 (207 aa).

Positions 1 to 9 are cleaved as a propeptide — removed in mature form; by autocatalysis; sequence MWALDKIKG. Residue T10 is the Nucleophile of the active site.

Belongs to the peptidase T1B family. As to quaternary structure, the 20S proteasome core is composed of 14 alpha and 14 beta subunits that assemble into four stacked heptameric rings, resulting in a barrel-shaped structure. The two inner rings, each composed of seven catalytic beta subunits, are sandwiched by two outer rings, each composed of seven alpha subunits. The catalytic chamber with the active sites is on the inside of the barrel. Has a gated structure, the ends of the cylinder being occluded by the N-termini of the alpha-subunits. Is capped at one or both ends by the proteasome regulatory ATPase, PAN.

The protein resides in the cytoplasm. The enzyme catalyses Cleavage of peptide bonds with very broad specificity.. With respect to regulation, the formation of the proteasomal ATPase PAN-20S proteasome complex, via the docking of the C-termini of PAN into the intersubunit pockets in the alpha-rings, triggers opening of the gate for substrate entry. Interconversion between the open-gate and close-gate conformations leads to a dynamic regulation of the 20S proteasome proteolysis activity. Functionally, component of the proteasome core, a large protease complex with broad specificity involved in protein degradation. This is Proteasome subunit beta 1 from Thermococcus sibiricus (strain DSM 12597 / MM 739).